We begin with the raw amino-acid sequence, 107 residues long: L-amino-acid oxidase (107 aa).

Position 35–38 (Gly-35–Arg-38) interacts with FAD. Positions 38 and 49 each coordinate substrate.

Belongs to the flavin monoamine oxidase family. FIG1 subfamily. In terms of assembly, homodimer; non-covalently linked. The cofactor is FAD. Post-translationally, N-glycosylated. Expressed by the venom gland.

The protein localises to the secreted. It catalyses the reaction an L-alpha-amino acid + O2 + H2O = a 2-oxocarboxylate + H2O2 + NH4(+). It carries out the reaction L-leucine + O2 + H2O = 4-methyl-2-oxopentanoate + H2O2 + NH4(+). The enzyme catalyses L-phenylalanine + O2 + H2O = 3-phenylpyruvate + H2O2 + NH4(+). The catalysed reaction is L-tryptophan + O2 + H2O = indole-3-pyruvate + H2O2 + NH4(+). It catalyses the reaction L-methionine + O2 + H2O = 4-methylsulfanyl-2-oxobutanoate + H2O2 + NH4(+). It carries out the reaction L-isoleucine + O2 + H2O = (S)-3-methyl-2-oxopentanoate + H2O2 + NH4(+). The enzyme catalyses L-arginine + O2 + H2O = 5-guanidino-2-oxopentanoate + H2O2 + NH4(+). The catalysed reaction is L-histidine + O2 + H2O = 3-(imidazol-5-yl)pyruvate + H2O2 + NH4(+). Functionally, catalyzes an oxidative deamination of predominantly hydrophobic and aromatic L-amino acids, thus producing hydrogen peroxide that may contribute to the diverse toxic effects of this enzyme. Shows high activity on L-Met, moderate activity on L-Trp, L-Leu, L-His, L-Phe, L-Arg, L-Ile, low activity on L-Val, L-Glu, L-Lys, L-Gln, L-Asn, L-Tyr, L-Ala, and no activity on L-Asp, L-Ser, L-Pro, L-Gly, L-Thr and L-Cys. Shows antimicrobial activity inhibiting the growth of both Gram-negative and Gram-positive bacteria. Also inhibits platelet aggregation induced by ADP or collagen. Effects of snake L-amino oxidases on platelets are controversial, since they either induce aggregation or inhibit agonist-induced aggregation. These different effects are probably due to different experimental conditions. This protein may also induce hemorrhage, hemolysis, edema, apoptosis, and have antiparasitic activities. This Macrovipera lebetinus (Levantine viper) protein is L-amino-acid oxidase.